The chain runs to 906 residues: MERDGDQAGHGPRHGSAGNGRELESPAAASLLAPMDLGEEPLEKAERARPAKDPNTYKVLSLVLSVCVLTTILGCIFGLKPSCAKEVKSCKGRCFERTFSNCRCDAACVSLGNCCLDFQETCVEPTHIWTCNKFRCGEKRLSRFVCSCADDCKTHNDCCINYSSVCQDKKSWVEETCESIDTPECPAEFESPPTLLFSLDGFRAEYLHTWGGLLPVISKLKNCGTYTKNMRPMYPTKTFPNHYSIVTGLYPESHGIIDNKMYDPKMNASFSLKSKEKFNPLWYKGQPIWVTANHQEVKSGTYFWPGSDVEIDGILPDIYKVYNGSVPFEERILAVLEWLQLPSHERPHFYTLYLEEPDSSGHSHGPVSSEVIKALQKVDRLVGMLMDGLKDLGLDKCLNLILISDHGMEQGSCKKYVYLNKYLGDVNNVKVVYGPAARLRPTDVPETYYSFNYEALAKNLSCREPNQHFRPYLKPFLPKRLHFAKSDRIEPLTFYLDPQWQLALNPSERKYCGSGFHGSDNLFSNMQALFIGYGPAFKHGAEVDSFENIEVYNLMCDLLGLIPAPNNGSHGSLNHLLKKPIYNPSHPKEEGFLSQCPIKSTSNDLGCTCDPWIVPIKDFEKQLNLTTEDVDDIYHMTVPYGRPRILLKQHHVCLLQQQQFLTGYSLDLLMPLWASYTFLRNDQFSRDDFSNCLYQDLRIPLSPVHKCSYYKSNSKLSYGFLTPPRLNRVSNHIYSEALLTSNIVPMYQSFQVIWHYLHDTLLQRYAHERNGINVVSGPVFDFDYDGRYDSLEILKQNSRVIRSQEILIPTHFFIVLTSCKQLSETPLECSALESSAYILPHRPDNIESCTHGKRESSWVEELLTLHRARVTDVELITGLSFYQDRQESVSELLRLKTHLPIFSQED.

The interval 1-22 (MERDGDQAGHGPRHGSAGNGRE) is disordered. Residues 1-58 (MERDGDQAGHGPRHGSAGNGRELESPAAASLLAPMDLGEEPLEKAERARPAKDPNTYK) lie on the Cytoplasmic side of the membrane. S25 bears the Phosphoserine mark. The Di-leucine motif signature appears at 27–34 (AAASLLAP). A helical; Signal-anchor for type II membrane protein membrane pass occupies residues 59–79 (VLSLVLSVCVLTTILGCIFGL). At 80-906 (KPSCAKEVKS…THLPIFSQED (827 aa)) the chain is on the extracellular side. SMB domains lie at 86-126 (EVKS…VEPT) and 127-171 (HIWT…DKKS). Intrachain disulfides connect C90-C104, C94-C122, C102-C115, C108-C114, C131-C148, C136-C166, C146-C159, C152-C158, C177-C223, and C185-C397. An N-linked (GlcNAc...) asparagine glycan is attached at N161. Residues 173-573 (VEETCESIDT…APNNGSHGSL (401 aa)) are phosphodiesterase. AMP contacts are provided by D200, T238, and N259. Zn(2+) contacts are provided by D200 and T238. The active-site AMP-threonine intermediate is the T238. CMP is bound by residues T238 and N259. Positions 238 and 259 each coordinate dTMP. GMP is bound by residues T238 and N259. At T238 the chain carries Phosphothreonine. The N-linked (GlcNAc...) asparagine glycan is linked to N267. The GMP site is built by L272, K277, and Y322. Residues K277 and Y322 each coordinate AMP. Residues K277 and Y322 each coordinate CMP. Residue Y322 participates in dTMP binding. Residue N323 is glycosylated (N-linked (GlcNAc...) asparagine). D358 is an AMP binding site. Positions 358, 362, 405, and 406 each coordinate Zn(2+). Position 358 (D358) interacts with CMP. D358 provides a ligand contact to dTMP. D358 contacts GMP. Position 362 (H362) interacts with 2',3'-cGAMP. AMP is bound at residue H406. H406 contributes to the CMP binding site. Residue H406 participates in dTMP binding. H406 contacts GMP. 6 cysteine pairs are disulfide-bonded: C413–C512, C462–C849, C596–C653, C607–C707, C609–C692, and C819–C829. N459 carries N-linked (GlcNAc...) asparagine glycosylation. Residue S514 coordinates 2',3'-cGAMP. H517 serves as a coordination point for AMP. H517 contacts Zn(2+). Residue H517 participates in CMP binding. Residue H517 participates in dTMP binding. Residue H517 participates in GMP binding. 2 N-linked (GlcNAc...) asparagine glycosylation sites follow: N567 and N624. The segment at 579 to 628 (KPIYNPSHPKEEGFLSQCPIKSTSNDLGCTCDPWIVPIKDFEKQLNLTTE) is linker. Residues 635-906 (HMTVPYGRPR…THLPIFSQED (272 aa)) are nuclease-like domain. D781, D783, D785, R787, and D789 together coordinate Ca(2+).

Belongs to the nucleotide pyrophosphatase/phosphodiesterase family. Ectonucleotide pyrophosphatase/phosphodiesterase family member 1: Homodimer. Ectonucleotide pyrophosphatase/phosphodiesterase family member 1: Interacts with INSR; leading to inhibit INSR autophosphorylation and subsequent activation of INSR kinase activity. Ectonucleotide pyrophosphatase/phosphodiesterase family member 1, secreted form: Monomeric. Requires Zn(2+) as cofactor. In terms of processing, N-glycosylated. The secreted form is produced through cleavage at Lys-85 by intracellular processing. Selectively expressed on the surface of antibody-secreting cells. Expressed in osteocytes and osteoclasts.

It is found in the cell membrane. The protein resides in the basolateral cell membrane. The protein localises to the secreted. The enzyme catalyses Hydrolytically removes 5'-nucleotides successively from the 3'-hydroxy termini of 3'-hydroxy-terminated oligonucleotides.. It carries out the reaction a ribonucleoside 5'-triphosphate + H2O = a ribonucleoside 5'-phosphate + diphosphate + H(+). The catalysed reaction is ATP + H2O = AMP + diphosphate + H(+). It catalyses the reaction UTP + H2O = UMP + diphosphate + H(+). The enzyme catalyses GTP + H2O = GMP + diphosphate + H(+). It carries out the reaction CTP + H2O = CMP + diphosphate + H(+). The catalysed reaction is 2',3'-cGAMP + 2 H2O = GMP + AMP + 2 H(+). It catalyses the reaction P(1),P(4)-bis(5'-adenosyl) tetraphosphate + H2O = AMP + ATP + 2 H(+). The enzyme catalyses 3',5'-cyclic AMP + H2O = AMP + H(+). Its activity is regulated as follows. At low concentrations of ATP, a phosphorylated intermediate is formed which inhibits further hydrolysis. Functionally, nucleotide pyrophosphatase that generates diphosphate (PPi) and functions in bone mineralization and soft tissue calcification by regulating pyrophosphate levels. PPi inhibits bone mineralization and soft tissue calcification by binding to nascent hydroxyapatite crystals, thereby preventing further growth of these crystals. Preferentially hydrolyzes ATP, but can also hydrolyze other nucleoside 5' triphosphates such as GTP, CTP and UTP to their corresponding monophosphates with release of pyrophosphate, as well as diadenosine polyphosphates, and also 3',5'-cAMP to AMP. May also be involved in the regulation of the availability of nucleotide sugars in the endoplasmic reticulum and Golgi, and the regulation of purinergic signaling. Inhibits ectopic joint calcification and maintains articular chondrocytes by repressing hedgehog signaling; it is however unclear whether hedgehog inhibition is direct or indirect. Appears to modulate insulin sensitivity. Also involved in melanogenesis. Also able to hydrolyze 2',3'-cGAMP (cyclic GMP-AMP), a second messenger that activates TMEM173/STING and triggers type-I interferon production. 2',3'-cGAMP degradation takes place in the lumen or extracellular space, and not in the cytosol where it is produced; the role of 2',3'-cGAMP hydrolysis is therefore unclear. Not able to hydrolyze the 2',3'-cGAMP linkage isomer 3',3'-cGAMP. The sequence is that of Ectonucleotide pyrophosphatase/phosphodiesterase family member 1 from Mus musculus (Mouse).